A 353-amino-acid polypeptide reads, in one-letter code: Photosystem II D2 protein (353 aa).

Thr-2 bears the N-acetylthreonine mark. Thr-2 carries the phosphothreonine modification. Residues Cys-41 to Thr-61 traverse the membrane as a helical segment. His-118 contacts chlorophyll a. A helical membrane pass occupies residues Gly-125–Pro-141. Residues Gln-130 and Asn-143 each contribute to the pheophytin a site. A helical transmembrane segment spans residues Val-153–Ser-166. His-198 is a chlorophyll a binding site. A helical membrane pass occupies residues Ala-208–Asp-228. Residues His-215 and Phe-262 each contribute to the a plastoquinone site. His-215 contributes to the Fe cation binding site. Residue His-269 coordinates Fe cation. A helical membrane pass occupies residues Gly-279–Arg-295.

Belongs to the reaction center PufL/M/PsbA/D family. As to quaternary structure, PSII is composed of 1 copy each of membrane proteins PsbA, PsbB, PsbC, PsbD, PsbE, PsbF, PsbH, PsbI, PsbJ, PsbK, PsbL, PsbM, PsbT, PsbX, PsbY, PsbZ, Psb30/Ycf12, at least 3 peripheral proteins of the oxygen-evolving complex and a large number of cofactors. It forms dimeric complexes. The cofactor is The D1/D2 heterodimer binds P680, chlorophylls that are the primary electron donor of PSII, and subsequent electron acceptors. It shares a non-heme iron and each subunit binds pheophytin, quinone, additional chlorophylls, carotenoids and lipids. There is also a Cl(-1) ion associated with D1 and D2, which is required for oxygen evolution. The PSII complex binds additional chlorophylls, carotenoids and specific lipids..

It localises to the plastid. Its subcellular location is the chloroplast thylakoid membrane. The catalysed reaction is 2 a plastoquinone + 4 hnu + 2 H2O = 2 a plastoquinol + O2. Functionally, photosystem II (PSII) is a light-driven water:plastoquinone oxidoreductase that uses light energy to abstract electrons from H(2)O, generating O(2) and a proton gradient subsequently used for ATP formation. It consists of a core antenna complex that captures photons, and an electron transfer chain that converts photonic excitation into a charge separation. The D1/D2 (PsbA/PsbD) reaction center heterodimer binds P680, the primary electron donor of PSII as well as several subsequent electron acceptors. D2 is needed for assembly of a stable PSII complex. The sequence is that of Photosystem II D2 protein from Solanum bulbocastanum (Wild potato).